An 83-amino-acid polypeptide reads, in one-letter code: U5-theraphotoxin-Hs1a 6 (83 aa).

An N-terminal signal peptide occupies residues Met1–Ala21. A propeptide spanning residues Ser22–Arg49 is cleaved from the precursor. Cystine bridges form between Cys51-Cys63, Cys56-Cys68, and Cys62-Cys75.

The protein belongs to the neurotoxin 10 (Hwtx-1) family. 51 (Hntx-8) subfamily. Hntx-8 sub-subfamily. Expressed by the venom gland.

It is found in the secreted. Functionally, agglutinates erythrocytes. The sequence is that of U5-theraphotoxin-Hs1a 6 from Cyriopagopus schmidti (Chinese bird spider).